A 314-amino-acid polypeptide reads, in one-letter code: Nerylneryl diphosphate synthase CPT2, chloroplastic (314 aa).

The N-terminal 61 residues, 1-61 (MNSSIVSQHF…MSDRGLSKIS (61 aa)), are a transit peptide targeting the chloroplast. Aspartate 97 is a catalytic residue.

Belongs to the UPP synthase family. Requires Mg(2+) as cofactor. In terms of tissue distribution, expressed in stems. Expressed in petiolules. Expressed at low levels in leaf trichomes, old leaf and roots.

The protein localises to the plastid. It localises to the chloroplast. It catalyses the reaction 3 isopentenyl diphosphate + dimethylallyl diphosphate = nerylneryl diphosphate + 3 diphosphate. The enzyme catalyses isopentenyl diphosphate + dimethylallyl diphosphate = neryl diphosphate + diphosphate. It carries out the reaction neryl diphosphate + isopentenyl diphosphate = (2Z,6Z)-farnesyl diphosphate + diphosphate. The catalysed reaction is (2Z,6Z)-farnesyl diphosphate + isopentenyl diphosphate = nerylneryl diphosphate + diphosphate. Its function is as follows. Uses dimethylallyl diphosphate and isopentenyl diphosphate to catalyze the cis-prenyl chain elongation and produce the 20 carbon product nerylneryl diphosphate. This is Nerylneryl diphosphate synthase CPT2, chloroplastic from Solanum lycopersicum (Tomato).